The following is a 475-amino-acid chain: Bifunctional protein HldE (475 aa).

Residues 1-318 (MKVTLPDFER…ENAVRGRAET (318 aa)) are ribokinase. 195–198 (NLSE) serves as a coordination point for ATP. The active site involves Asp264. The interval 344-475 (MTNGVFDILH…NIIKKIQKNS (132 aa)) is cytidylyltransferase.

This sequence in the N-terminal section; belongs to the carbohydrate kinase PfkB family. In the C-terminal section; belongs to the cytidylyltransferase family. As to quaternary structure, homodimer.

The enzyme catalyses D-glycero-beta-D-manno-heptose 7-phosphate + ATP = D-glycero-beta-D-manno-heptose 1,7-bisphosphate + ADP + H(+). It catalyses the reaction D-glycero-beta-D-manno-heptose 1-phosphate + ATP + H(+) = ADP-D-glycero-beta-D-manno-heptose + diphosphate. It functions in the pathway nucleotide-sugar biosynthesis; ADP-L-glycero-beta-D-manno-heptose biosynthesis; ADP-L-glycero-beta-D-manno-heptose from D-glycero-beta-D-manno-heptose 7-phosphate: step 1/4. Its pathway is nucleotide-sugar biosynthesis; ADP-L-glycero-beta-D-manno-heptose biosynthesis; ADP-L-glycero-beta-D-manno-heptose from D-glycero-beta-D-manno-heptose 7-phosphate: step 3/4. Its function is as follows. Catalyzes the phosphorylation of D-glycero-D-manno-heptose 7-phosphate at the C-1 position to selectively form D-glycero-beta-D-manno-heptose-1,7-bisphosphate. Catalyzes the ADP transfer from ATP to D-glycero-beta-D-manno-heptose 1-phosphate, yielding ADP-D-glycero-beta-D-manno-heptose. This is Bifunctional protein HldE from Cronobacter sakazakii (strain ATCC BAA-894) (Enterobacter sakazakii).